A 1642-amino-acid polypeptide reads, in one-letter code: Cortactin-binding protein 2 (1642 aa).

Disordered stretches follow at residues 1-27, 203-222, 366-433, 446-471, and 491-611; these read MATD…AEAA, KKKT…RSTE, IGAS…HPGL, GSNA…SPTS, and RFTS…PSID. Residues 119 to 276 adopt a coiled-coil conformation; it reads RKMQERMSTQ…EQLKRGTDSK (158 aa). Residues 385 to 394 show a composition bias toward polar residues; it reads GPSTGSTADL. A compositionally biased stretch (low complexity) spans 395–407; it reads TSSPTPVPSTVSP. The residue at position 491 (Arg491) is an Asymmetric dimethylarginine. Over residues 497 to 506 the composition is skewed to pro residues; it reads AGAPPRPGAP. Residues 576–586 are compositionally biased toward polar residues; that stretch reads TVASPPSTLPQ. ANK repeat units follow at residues 702-732, 736-765, 769-798, 802-831, 835-864, and 904-934; these read GRPT…DINY, DGHS…QVNA, NGFT…NINH, GGQT…DRSV, DGWT…PAHG, and EGWT…EPER. The interval 1441–1469 is disordered; that stretch reads SGAWRKVSTSPRKKSGRFSSPTWNKPDLS. Ser1513 bears the Phosphoserine mark. The interval 1545–1642 is disordered; that stretch reads LRRFDSSGNN…NSRDLEPTQK (98 aa). Composition is skewed to polar residues over residues 1552 to 1563 and 1571 to 1588; these read GNNPVFSATVNN and KEVS…SNSK. Residues 1613–1627 are compositionally biased toward low complexity; that stretch reads SQNTKRSSSSSNTRQ.

Interacts with CTTN/cortactin SH3 domain. Interacts with STRN, STRN4/zinedin and MOB4/phocein; this interactions mediate the association with the STRIPAK core complex and may regulate dendritic spine distribution of the STRIPAK complex in hippocampal neurons. Activation of glutamate receptors weakens the interaction with STRN and STRN4.

It is found in the cytoplasm. The protein resides in the cell cortex. Its subcellular location is the cell projection. The protein localises to the dendritic spine. Its function is as follows. Regulates the dendritic spine distribution of CTTN/cortactin in hippocampal neurons, and thus controls dendritic spinogenesis and dendritic spine maintenance. Associates with the striatin-interacting phosphatase and kinase (STRIPAK) core complex to regulate dendritic spine distribution of the STRIPAK complex in hippocampal neurons. This Muntiacus muntjak (Barking deer) protein is Cortactin-binding protein 2 (CTTNBP2).